The following is a 293-amino-acid chain: MATNESVSIFSSASLAVEYVDSLLPENPLQEPFKNAWNYMLNNYTKFQIATWGSLIVHEALYFSFCLPGFLFQFIPYMKKYKIQKDKPETWENQWKCFKVLLFNHFCIQLPLICGTYYFTEYFNIPYDWERMPRWYFLLARCFGCAVIEDTWHYFMHRLLHHKRIYKYIHKVHHEFQAPFGMEAEYAHPLETLILGTGFFIGIVLLCDHVILLWAWVTIRLLETIDVHSGYDIPLNPLNLIPFYAGSRHHDFHHMNFIGNYASTFTWWDRIFGTDSQYHAYYEKKKKFEKKTE.

2 helical membrane-spanning segments follow: residues 55–75 (LIVHEALYFSFCLPGFLFQFI) and 100–120 (VLLFNHFCIQLPLICGTYYFT). A Fatty acid hydroxylase domain is found at 145-274 (CAVIEDTWHY…FTWWDRIFGT (130 aa)). The Histidine box-1 motif lies at 157–161 (HRLLH). The Histidine box-2 motif lies at 170 to 174 (HKVHH). Residues 199-219 (FFIGIVLLCDHVILLWAWVTI) form a helical membrane-spanning segment. The Histidine box-3 motif lies at 249 to 255 (HHDFHHM).

This sequence belongs to the sterol desaturase family. Fe cation serves as cofactor. Post-translationally, ubiquitinated by MARCHF6, leading to proteasomal degradation.

The protein resides in the endoplasmic reticulum membrane. It carries out the reaction 4,4-dimethyl-5alpha-cholest-7-en-3beta-ol + 6 Fe(II)-[cytochrome b5] + 3 O2 + 5 H(+) = 4alpha-carboxy-4beta-methyl-5alpha-cholest-7-ene-3beta-ol + 6 Fe(III)-[cytochrome b5] + 4 H2O. The enzyme catalyses 4,4-dimethyl-5alpha-cholesta-8,24-dien-3beta-ol + 6 Fe(II)-[cytochrome b5] + 3 O2 + 5 H(+) = 4beta-methylzymosterol-4alpha-carboxylate + 6 Fe(III)-[cytochrome b5] + 4 H2O. It catalyses the reaction 4alpha-methylzymosterol + 6 Fe(II)-[cytochrome b5] + 3 O2 + 5 H(+) = 4alpha-carboxyzymosterol + 6 Fe(III)-[cytochrome b5] + 4 H2O. The catalysed reaction is 4alpha-methyl-5alpha-cholest-7-en-3beta-ol + 6 Fe(II)-[cytochrome b5] + 3 O2 + 5 H(+) = 4alpha-carboxy-5alpha-cholest-7-en-3beta-ol + 6 Fe(III)-[cytochrome b5] + 4 H2O. It carries out the reaction 4,4-dimethyl-5alpha-cholest-8-en-3beta-ol + 6 Fe(II)-[cytochrome b5] + 3 O2 + 5 H(+) = 4alpha-carboxy-4beta-methyl-5alpha-cholest-8-en-3beta-ol + 6 Fe(III)-[cytochrome b5] + 4 H2O. The enzyme catalyses 4alpha-methyl-5alpha-cholest-8-en-3beta-ol + 6 Fe(II)-[cytochrome b5] + 3 O2 + 5 H(+) = 4alpha-carboxy-5alpha-cholest-8-ene-3beta-ol + 6 Fe(III)-[cytochrome b5] + 4 H2O. The protein operates within steroid biosynthesis; zymosterol biosynthesis; zymosterol from lanosterol: step 3/6. It functions in the pathway steroid biosynthesis; cholesterol biosynthesis. In terms of biological role, catalyzes the three-step monooxygenation required for the demethylation of 4,4-dimethyl and 4alpha-methylsterols, which can be subsequently metabolized to cholesterol. The polypeptide is Methylsterol monooxygenase 1 (MSMO1) (Macaca fascicularis (Crab-eating macaque)).